Here is a 117-residue protein sequence, read N- to C-terminus: Ribulose bisphosphate carboxylase small subunit 1 (117 aa).

This sequence belongs to the RuBisCO small chain family. In terms of assembly, heterohexadecamer of 8 large and 8 small subunits.

Functionally, ruBisCO catalyzes two reactions: the carboxylation of D-ribulose 1,5-bisphosphate, the primary event in carbon dioxide fixation, as well as the oxidative fragmentation of the pentose substrate. Both reactions occur simultaneously and in competition at the same active site. Although the small subunit is not catalytic it is essential for maximal activity. The sequence is that of Ribulose bisphosphate carboxylase small subunit 1 from Hydrogenovibrio marinus.